Here is a 137-residue protein sequence, read N- to C-terminus: Acidic phospholipase A2 beta-bungarotoxin A chain (137 aa).

The signal sequence occupies residues 1 to 9 (AVCVSLLGA). Residues 10–17 (ANIPPHPL) constitute a propeptide that is removed on maturation. Cystine bridges form between C44–C136, C46–C62, C61–C117, C68–C110, C78–C103, and C96–C108. Ca(2+)-binding residues include Y45, G47, and G49. H65 is an active-site residue. D66 lines the Ca(2+) pocket. D111 is a catalytic residue.

It belongs to the phospholipase A2 family. Group I subfamily. D49 sub-subfamily. As to quaternary structure, heterodimer; disulfide-linked. The A chain has phospholipase A2 activity and the B chain shows homology with the basic protease inhibitors. The cofactor is Ca(2+). As to expression, expressed by the venom gland.

It localises to the secreted. It carries out the reaction a 1,2-diacyl-sn-glycero-3-phosphocholine + H2O = a 1-acyl-sn-glycero-3-phosphocholine + a fatty acid + H(+). Functionally, beta bungarotoxin is a presynaptic neurotoxin. The A chain has phospholipase activity. PLA2 catalyzes the calcium-dependent hydrolysis of the 2-acyl groups in 3-sn-phosphoglycerides. The polypeptide is Acidic phospholipase A2 beta-bungarotoxin A chain (Bungarus candidus (Malayan krait)).